A 473-amino-acid polypeptide reads, in one-letter code: Sorting nexin-17 (473 aa).

A PX domain is found at 1–108 (MHFSIPETEV…SFLRKAQQET (108 aa)). 4 residues coordinate a 1,2-diacyl-sn-glycero-3-phospho-(1D-myo-inositol-3-phosphate): R35, S37, K61, and R74. The region spanning 114 to 205 (EEVQLEIYLS…YRIILRKSYW (92 aa)) is the Ras-associating domain. Residues 114 to 433 (EEVQLEIYLS…DPNREQVVKL (320 aa)) are FERM-like. The segment at 269–433 (GYIKFDPCIT…DPNREQVVKL (165 aa)) is PTB-like F3 module. The segment at 391 to 431 (SIKKQMQKKRLNGSLQRSDSQQAVKSPPILDSPDPNREQVV) is disordered. The span at 403-414 (GSLQRSDSQQAV) shows a compositional bias: polar residues.

It belongs to the sorting nexin family. Monomer. Interacts with CCDC22, CCDC93, DSCR3 and VPS35L; the interaction with DSCR3 is direct and associates SNX17 with the retriever and CCC complexes.

The protein localises to the cytoplasm. The protein resides in the early endosome. It localises to the cytoplasmic vesicle membrane. In terms of biological role, critical regulator of endosomal recycling of numerous surface proteins, including integrins, signaling receptor and channels. Binds to NPxY sequences in the cytoplasmic tails of target cargos. Associates with retriever and CCC complexes to prevent lysosomal degradation and promote cell surface recycling of numerous cargos such as integrins ITGB1, ITGB5 and their associated alpha subunits. Also required for maintenance of normal cell surface levels of APP and LRP1. Interacts with membranes containing phosphatidylinositol 3-phosphate (PtdIns(3P)). This is Sorting nexin-17 (snx17) from Danio rerio (Zebrafish).